A 172-amino-acid chain; its full sequence is Shikimate kinase 2 (172 aa).

Position 9 to 16 (9 to 16 (GARAAGKT)) interacts with ATP.

The protein belongs to the shikimate kinase family.

It is found in the cytoplasm. It carries out the reaction shikimate + ATP = 3-phosphoshikimate + ADP + H(+). It participates in metabolic intermediate biosynthesis; chorismate biosynthesis; chorismate from D-erythrose 4-phosphate and phosphoenolpyruvate: step 5/7. The polypeptide is Shikimate kinase 2 (Syntrophotalea carbinolica (strain DSM 2380 / NBRC 103641 / GraBd1) (Pelobacter carbinolicus)).